A 473-amino-acid polypeptide reads, in one-letter code: Glutamate--tRNA ligase (473 aa).

Residues 9 to 19 (PSPTGELHLGS) carry the 'HIGH' region motif. Positions 237-241 (KLSKK) match the 'KMSKS' region motif. K240 serves as a coordination point for ATP.

This sequence belongs to the class-I aminoacyl-tRNA synthetase family. Glutamate--tRNA ligase type 1 subfamily. In terms of assembly, monomer.

The protein resides in the cytoplasm. The catalysed reaction is tRNA(Glu) + L-glutamate + ATP = L-glutamyl-tRNA(Glu) + AMP + diphosphate. Catalyzes the attachment of glutamate to tRNA(Glu) in a two-step reaction: glutamate is first activated by ATP to form Glu-AMP and then transferred to the acceptor end of tRNA(Glu). The polypeptide is Glutamate--tRNA ligase (Wigglesworthia glossinidia brevipalpis).